Consider the following 178-residue polypeptide: MLKGAIAQRYAQALFELAVQENLDGIEAELQELVQCVEQNAEVAHVLYHPHISLSEKKDLMNKIFAGELSVTVRNFLNLLIDRRRQNYLLEIARVFARLADEARNIVEAKVASAIPLSETQEQRLHQELARMTGKNVRMVKEVRPELIGGVMIQIGDRVMDGTVAFKLQRIRQSLSHA.

Belongs to the ATPase delta chain family. As to quaternary structure, F-type ATPases have 2 components, F(1) - the catalytic core - and F(0) - the membrane proton channel. F(1) has five subunits: alpha(3), beta(3), gamma(1), delta(1), epsilon(1). F(0) has three main subunits: a(1), b(2) and c(10-14). The alpha and beta chains form an alternating ring which encloses part of the gamma chain. F(1) is attached to F(0) by a central stalk formed by the gamma and epsilon chains, while a peripheral stalk is formed by the delta and b chains.

The protein resides in the cell membrane. Its function is as follows. F(1)F(0) ATP synthase produces ATP from ADP in the presence of a proton or sodium gradient. F-type ATPases consist of two structural domains, F(1) containing the extramembraneous catalytic core and F(0) containing the membrane proton channel, linked together by a central stalk and a peripheral stalk. During catalysis, ATP synthesis in the catalytic domain of F(1) is coupled via a rotary mechanism of the central stalk subunits to proton translocation. In terms of biological role, this protein is part of the stalk that links CF(0) to CF(1). It either transmits conformational changes from CF(0) to CF(1) or is implicated in proton conduction. This Desulfitobacterium hafniense (strain DSM 10664 / DCB-2) protein is ATP synthase subunit delta.